Here is a 389-residue protein sequence, read N- to C-terminus: GDSL esterase/lipase At5g14450 (389 aa).

Residues 1–30 form the signal peptide; that stretch reads MKDNLERAKLMVSSTVFSWLLLCLFAVTTS. Serine 48 (nucleophile) is an active-site residue. 2 N-linked (GlcNAc...) asparagine glycosylation sites follow: asparagine 125 and asparagine 335. Catalysis depends on residues aspartate 354 and histidine 357.

This sequence belongs to the 'GDSL' lipolytic enzyme family.

It localises to the secreted. In Arabidopsis thaliana (Mouse-ear cress), this protein is GDSL esterase/lipase At5g14450.